The chain runs to 227 residues: LysM and putative peptidoglycan-binding domain-containing protein 1 (227 aa).

Over residues 1-11 (MASPSRQPPPG) the composition is skewed to pro residues. The disordered stretch occupies residues 1-22 (MASPSRQPPPGGSGLLQGSRAR). 2 positions are modified to phosphoserine: S23 and S33. A LysM domain is found at 40–84 (LEHQLEPGDTLAGLALKYGVTMEQIKRANRLYTNDSIFLKKTLYI). Residues 97-150 (LDSEEEKDGEEKVHPSNSEVWPHSTERKKQETGAGRANGEVLPTPGQETPTPIH) form a disordered region. A phosphoserine mark is found at S99, S166, S194, and S212.

The protein is LysM and putative peptidoglycan-binding domain-containing protein 1 (LYSMD1) of Homo sapiens (Human).